The sequence spans 110 residues: T cell receptor alpha variable 35 (110 aa).

A signal peptide spans 1–19 (MLLEHLLIILWMQLTWVSG). In terms of domain architecture, Ig-like spans 20–110 (QQLNQSPQSM…DVGIYFCAGQ (91 aa)). Asn-40 and Asn-93 each carry an N-linked (GlcNAc...) asparagine glycan. Cys-41 and Cys-107 are oxidised to a cystine.

Alpha-beta TR is a heterodimer composed of an alpha and beta chain; disulfide-linked. The alpha-beta TR is associated with the transmembrane signaling CD3 coreceptor proteins to form the TR-CD3 (TcR or TCR). The assembly of alpha-beta TR heterodimers with CD3 occurs in the endoplasmic reticulum where a single alpha-beta TR heterodimer associates with one CD3D-CD3E heterodimer, one CD3G-CD3E heterodimer and one CD247 homodimer forming a stable octameric structure. CD3D-CD3E and CD3G-CD3E heterodimers preferentially associate with TR alpha and TR beta chains, respectively. The association of the CD247 homodimer is the last step of TcR assembly in the endoplasmic reticulum and is required for transport to the cell surface.

It localises to the cell membrane. Its function is as follows. V region of the variable domain of T cell receptor (TR) alpha chain that participates in the antigen recognition. Alpha-beta T cell receptors are antigen specific receptors which are essential to the immune response and are present on the cell surface of T lymphocytes. Recognize peptide-major histocompatibility (MH) (pMH) complexes that are displayed by antigen presenting cells (APC), a prerequisite for efficient T cell adaptive immunity against pathogens. Binding of alpha-beta TR to pMH complex initiates TR-CD3 clustering on the cell surface and intracellular activation of LCK that phosphorylates the ITAM motifs of CD3G, CD3D, CD3E and CD247 enabling the recruitment of ZAP70. In turn ZAP70 phosphorylates LAT, which recruits numerous signaling molecules to form the LAT signalosome. The LAT signalosome propagates signal branching to three major signaling pathways, the calcium, the mitogen-activated protein kinase (MAPK) kinase and the nuclear factor NF-kappa-B (NF-kB) pathways, leading to the mobilization of transcription factors that are critical for gene expression and essential for T cell growth and differentiation. The T cell repertoire is generated in the thymus, by V-(D)-J rearrangement. This repertoire is then shaped by intrathymic selection events to generate a peripheral T cell pool of self-MH restricted, non-autoaggressive T cells. Post-thymic interaction of alpha-beta TR with the pMH complexes shapes TR structural and functional avidity. This chain is T cell receptor alpha variable 35, found in Homo sapiens (Human).